Here is a 648-residue protein sequence, read N- to C-terminus: Macrolide export ATP-binding/permease protein MacB 1 (648 aa).

The 239-residue stretch at 6 to 244 folds into the ABC transporter domain; sequence LQLSGIRRHF…PAPTTSRADT (239 aa). Position 42-49 (42-49) interacts with ATP; the sequence is GASGSGKS. Positions 222–248 are disordered; it reads VVADRRREPTPPSPAPTTSRADTGGRG. 4 helical membrane-spanning segments follow: residues 273–293, 521–541, 578–598, and 613–633; these read FLTMLGIIIGIAAVVSVVALG, LTLLIAMIALISLVVGGIGVM, LVCLLGGAAGVLLSLLIGVLF, and AVLMAFFCSSLIGVLFGFFPA.

Belongs to the ABC transporter superfamily. Macrolide exporter (TC 3.A.1.122) family. As to quaternary structure, homodimer. Part of the tripartite efflux system MacAB-TolC, which is composed of an inner membrane transporter, MacB, a periplasmic membrane fusion protein, MacA, and an outer membrane component, TolC. The complex forms a large protein conduit and can translocate molecules across both the inner and outer membranes. Interacts with MacA.

It localises to the cell inner membrane. In terms of biological role, part of the tripartite efflux system MacAB-TolC. MacB is a non-canonical ABC transporter that contains transmembrane domains (TMD), which form a pore in the inner membrane, and an ATP-binding domain (NBD), which is responsible for energy generation. Confers resistance against macrolides. This is Macrolide export ATP-binding/permease protein MacB 1 from Aeromonas hydrophila subsp. hydrophila (strain ATCC 7966 / DSM 30187 / BCRC 13018 / CCUG 14551 / JCM 1027 / KCTC 2358 / NCIMB 9240 / NCTC 8049).